A 163-amino-acid polypeptide reads, in one-letter code: MGVRFCKDGHVIQIIIENKEEVTMKKMKEQQKKREKTKNGRRVIAAKKIQAWWRGTLVRRTLLHAALSTWIIQSWWRLTKDRLLQKKRRAALSDYALRERAVVKLQSLVRMWRIHWRYCQVLNAIYVIQCHWQCHNCQTCALLRGHCVVTATHLQFHIEIINP.

IQ domains are found at residues 42-71 and 98-127; these read RVIA…STWI and RERA…AIYV.

The chain is IQ domain-containing protein F2 (IQCF2) from Bos taurus (Bovine).